The chain runs to 549 residues: MKNINPTQTAAWQALQKHFDEMKDVTIADLFAKDGDRFSKFSATFDDQMLVDYSKNRITEETLAKLQDLAKECDLAGAIKSMFSGEKINRTENRAVLHVALRNRSNTPILVDGKDVMPEVNAVLEKMKTFSEAIISGEWKGYTGKAITDVVNIGIGGSDLGPYMVTEALRPYKNHLNMHFVSNVDGTHISEVLKKVNPETTLFLVASKTFTTQETMTNAHSARDWFLKAAGDEKHVAKHFAALSTNAKAVGEFGIDTANMFEFWDWVGGRYSLWSAIGLSIVLSIGFDNFVELLSGAHAMDKHFSTTPAEKNLPVLLALIGIWYNNFFGAETEAILPYDQYMHRFAAYFQQGNMESNGKYVDRNGNVVDYQTGPIIWGEPGTNGQHAFYQLIHQGTKMVPCDFIAPAITHNPLSDHHQKLLSNFFAQTEALAFGKSREVVEQEYRDQGKDPATLDYVVPFKVFEGNRPTNSILLREITPFSLGALIALYEHKIFTQGVILNIFTFDQWGVELGKQLANRILPELKDDKEISSHDSSTNGLINRYKAWRG.

An N6-acetyllysine mark is found at K80, K228, and K234. Catalysis depends on E355, which acts as the Proton donor. Active-site residues include H386 and K514.

It belongs to the GPI family.

Its subcellular location is the cytoplasm. It catalyses the reaction alpha-D-glucose 6-phosphate = beta-D-fructose 6-phosphate. It participates in carbohydrate biosynthesis; gluconeogenesis. The protein operates within carbohydrate degradation; glycolysis; D-glyceraldehyde 3-phosphate and glycerone phosphate from D-glucose: step 2/4. Its function is as follows. Catalyzes the reversible isomerization of glucose-6-phosphate to fructose-6-phosphate. This is Glucose-6-phosphate isomerase from Shigella flexneri.